Reading from the N-terminus, the 377-residue chain is Phosphatidylserine decarboxylase proenzyme, mitochondrial (377 aa).

The transit peptide at 1 to 34 (MMPLFNVLRSARMLPAVSKKVVSPPMMLRSVREL) directs the protein to the mitochondrion. Over 35–61 (TNQSKNVYATKEVIIGASQKKKRSWVK) the chain is Mitochondrial matrix. Residues 62–80 (WLSVSTLIIGGASYVGYLF) traverse the membrane as a helical segment. The Mitochondrial intermembrane segment spans residues 81–377 (TPDWREIVDS…YGQSLVADGV (297 aa)). Active-site charge relay system; for autoendoproteolytic cleavage activity residues include aspartate 181, histidine 238, and serine 344. Serine 344 (schiff-base intermediate with substrate; via pyruvic acid; for decarboxylase activity) is an active-site residue. Pyruvic acid (Ser); by autocatalysis is present on serine 344.

This sequence belongs to the phosphatidylserine decarboxylase family. PSD-B subfamily. Eukaryotic type I sub-subfamily. As to quaternary structure, heterodimer of a large membrane-associated beta subunit and a small pyruvoyl-containing alpha subunit. The cofactor is pyruvate. In terms of processing, is synthesized initially as an inactive proenzyme. Formation of the active enzyme involves a self-maturation process in which the active site pyruvoyl group is generated from an internal serine residue via an autocatalytic post-translational modification. Two non-identical subunits are generated from the proenzyme in this reaction, and the pyruvate is formed at the N-terminus of the alpha chain, which is derived from the carboxyl end of the proenzyme. The autoendoproteolytic cleavage occurs by a canonical serine protease mechanism, in which the side chain hydroxyl group of the serine supplies its oxygen atom to form the C-terminus of the beta chain, while the remainder of the serine residue undergoes an oxidative deamination to produce ammonia and the pyruvoyl prosthetic group on the alpha chain. During this reaction, the Ser that is part of the protease active site of the proenzyme becomes the pyruvoyl prosthetic group, which constitutes an essential element of the active site of the mature decarboxylase.

The protein localises to the mitochondrion inner membrane. The enzyme catalyses a 1,2-diacyl-sn-glycero-3-phospho-L-serine + H(+) = a 1,2-diacyl-sn-glycero-3-phosphoethanolamine + CO2. Its pathway is phospholipid metabolism; phosphatidylethanolamine biosynthesis; phosphatidylethanolamine from CDP-diacylglycerol: step 2/2. In terms of biological role, catalyzes the formation of phosphatidylethanolamine (PtdEtn) from phosphatidylserine (PtdSer). Plays a central role in phospholipid metabolism and in the interorganelle trafficking of phosphatidylserine. The protein is Phosphatidylserine decarboxylase proenzyme, mitochondrial of Caenorhabditis elegans.